Reading from the N-terminus, the 275-residue chain is tRNA pseudouridine synthase A (275 aa).

The active-site Nucleophile is Asp56. Tyr109 serves as a coordination point for substrate.

Belongs to the tRNA pseudouridine synthase TruA family.

The enzyme catalyses uridine(38/39/40) in tRNA = pseudouridine(38/39/40) in tRNA. In terms of biological role, formation of pseudouridine at positions 38, 39 and 40 in the anticodon stem and loop of transfer RNAs. The sequence is that of tRNA pseudouridine synthase A from Methanothermobacter thermautotrophicus (strain ATCC 29096 / DSM 1053 / JCM 10044 / NBRC 100330 / Delta H) (Methanobacterium thermoautotrophicum).